Consider the following 308-residue polypeptide: Methionyl-tRNA formyltransferase (308 aa).

A (6S)-5,6,7,8-tetrahydrofolate-binding site is contributed by 109-112 (SLLP).

This sequence belongs to the Fmt family.

The catalysed reaction is L-methionyl-tRNA(fMet) + (6R)-10-formyltetrahydrofolate = N-formyl-L-methionyl-tRNA(fMet) + (6S)-5,6,7,8-tetrahydrofolate + H(+). In terms of biological role, attaches a formyl group to the free amino group of methionyl-tRNA(fMet). The formyl group appears to play a dual role in the initiator identity of N-formylmethionyl-tRNA by promoting its recognition by IF2 and preventing the misappropriation of this tRNA by the elongation apparatus. The sequence is that of Methionyl-tRNA formyltransferase from Methylobacillus flagellatus (strain ATCC 51484 / DSM 6875 / VKM B-1610 / KT).